Here is a 295-residue protein sequence, read N- to C-terminus: 4-diphosphocytidyl-2-C-methyl-D-erythritol kinase (295 aa).

The active site involves lysine 10. 97-107 serves as a coordination point for ATP; sequence PIGSGLGGASS. The active site involves aspartate 139.

The protein belongs to the GHMP kinase family. IspE subfamily. As to quaternary structure, homodimer.

It catalyses the reaction 4-CDP-2-C-methyl-D-erythritol + ATP = 4-CDP-2-C-methyl-D-erythritol 2-phosphate + ADP + H(+). It functions in the pathway isoprenoid biosynthesis; isopentenyl diphosphate biosynthesis via DXP pathway; isopentenyl diphosphate from 1-deoxy-D-xylulose 5-phosphate: step 3/6. In terms of biological role, catalyzes the phosphorylation of the position 2 hydroxy group of 4-diphosphocytidyl-2C-methyl-D-erythritol. The chain is 4-diphosphocytidyl-2-C-methyl-D-erythritol kinase from Blochmanniella pennsylvanica (strain BPEN).